We begin with the raw amino-acid sequence, 259 residues long: Probable metal transport system ATP-binding protein CT_068 (259 aa).

In terms of domain architecture, ABC transporter spans 9–241 (WSVEDLCVNY…AIFQAYGCEL (233 aa)). 41–48 (GPNGAGKS) serves as a coordination point for ATP.

Belongs to the ABC transporter superfamily.

It is found in the cell inner membrane. Part of an ATP-driven transport system CT_067/CT_068/CT_069/CT_070 for a metal. Probably responsible for energy coupling to the transport system. In Chlamydia trachomatis serovar D (strain ATCC VR-885 / DSM 19411 / UW-3/Cx), this protein is Probable metal transport system ATP-binding protein CT_068.